A 440-amino-acid polypeptide reads, in one-letter code: C4-dicarboxylate transport protein (440 aa).

Helical transmembrane passes span 8–28 (LYLQ…LFPA), 40–60 (FIKL…VTGI), 74–94 (LKGL…GLVV), 147–167 (GDIL…AALK), 187–207 (IVGF…AFTV), 221–241 (LIAC…GLVL), 288–308 (VVGL…SIYL), and 354–374 (AATL…LLGV). Residues 419–440 (EEVEPANEPEPPAVPAGAGLHG) form a disordered region.

It belongs to the dicarboxylate/amino acid:cation symporter (DAACS) (TC 2.A.23) family.

The protein resides in the cell inner membrane. Responsible for the transport of dicarboxylates such as succinate, fumarate, and malate from the periplasm across the membrane. The polypeptide is C4-dicarboxylate transport protein (Anaeromyxobacter dehalogenans (strain 2CP-1 / ATCC BAA-258)).